The following is a 261-amino-acid chain: Cytochrome c oxidase subunit 3 (261 aa).

Residues 1–15 (MTHQSHAYHMVKPSP) lie on the Mitochondrial matrix side of the membrane. Residues 16–34 (WPLTGALSALLMTSGLAMW) traverse the membrane as a helical segment. At 35–40 (FHFYST) the chain is on the mitochondrial intermembrane side. The helical transmembrane segment at 41 to 66 (TLLTLGLLTNTLTMYQWWRDVMREGT) threads the bilayer. The Mitochondrial matrix segment spans residues 67–72 (YQGHHT). A helical transmembrane segment spans residues 73–105 (PPVQKGLRYGMILFITSEVFFFAGFFWAFYHSS). Over 106–128 (LAPTPQLGGHWPPTGITPLNPLE) the chain is Mitochondrial intermembrane. The chain crosses the membrane as a helical span at residues 129–152 (VPLLNTSVLLASGVSITWAHHSLM). Residues 153–155 (ENN) lie on the Mitochondrial matrix side of the membrane. The helical transmembrane segment at 156-183 (RNQMIQALLITILLGLYFTLLQASEYFE) threads the bilayer. The Mitochondrial intermembrane segment spans residues 184 to 190 (SPFTISD). Residues 191-223 (GIYGSTFFVATGFHGLHVIIGSTFLTICLIRQL) form a helical membrane-spanning segment. Residues 224–232 (MFHFTSKHH) lie on the Mitochondrial matrix side of the membrane. The helical transmembrane segment at 233–256 (FGFQAAAWYWHFVDVVWLFLYVSI) threads the bilayer. Residues 257–261 (YWWGS) lie on the Mitochondrial intermembrane side of the membrane.

This sequence belongs to the cytochrome c oxidase subunit 3 family. As to quaternary structure, component of the cytochrome c oxidase (complex IV, CIV), a multisubunit enzyme composed of 14 subunits. The complex is composed of a catalytic core of 3 subunits MT-CO1, MT-CO2 and MT-CO3, encoded in the mitochondrial DNA, and 11 supernumerary subunits COX4I, COX5A, COX5B, COX6A, COX6B, COX6C, COX7A, COX7B, COX7C, COX8 and NDUFA4, which are encoded in the nuclear genome. The complex exists as a monomer or a dimer and forms supercomplexes (SCs) in the inner mitochondrial membrane with NADH-ubiquinone oxidoreductase (complex I, CI) and ubiquinol-cytochrome c oxidoreductase (cytochrome b-c1 complex, complex III, CIII), resulting in different assemblies (supercomplex SCI(1)III(2)IV(1) and megacomplex MCI(2)III(2)IV(2)).

The protein localises to the mitochondrion inner membrane. The catalysed reaction is 4 Fe(II)-[cytochrome c] + O2 + 8 H(+)(in) = 4 Fe(III)-[cytochrome c] + 2 H2O + 4 H(+)(out). Component of the cytochrome c oxidase, the last enzyme in the mitochondrial electron transport chain which drives oxidative phosphorylation. The respiratory chain contains 3 multisubunit complexes succinate dehydrogenase (complex II, CII), ubiquinol-cytochrome c oxidoreductase (cytochrome b-c1 complex, complex III, CIII) and cytochrome c oxidase (complex IV, CIV), that cooperate to transfer electrons derived from NADH and succinate to molecular oxygen, creating an electrochemical gradient over the inner membrane that drives transmembrane transport and the ATP synthase. Cytochrome c oxidase is the component of the respiratory chain that catalyzes the reduction of oxygen to water. Electrons originating from reduced cytochrome c in the intermembrane space (IMS) are transferred via the dinuclear copper A center (CU(A)) of subunit 2 and heme A of subunit 1 to the active site in subunit 1, a binuclear center (BNC) formed by heme A3 and copper B (CU(B)). The BNC reduces molecular oxygen to 2 water molecules using 4 electrons from cytochrome c in the IMS and 4 protons from the mitochondrial matrix. This chain is Cytochrome c oxidase subunit 3 (MT-CO3), found in Pan troglodytes (Chimpanzee).